Reading from the N-terminus, the 542-residue chain is Chaperonin GroEL 2 (542 aa).

ATP contacts are provided by residues T30–P33, K51, D87–T91, G415, and D496.

It belongs to the chaperonin (HSP60) family. As to quaternary structure, forms a cylinder of 14 subunits composed of two heptameric rings stacked back-to-back. Interacts with the co-chaperonin GroES.

Its subcellular location is the cytoplasm. The catalysed reaction is ATP + H2O + a folded polypeptide = ADP + phosphate + an unfolded polypeptide.. Together with its co-chaperonin GroES, plays an essential role in assisting protein folding. The GroEL-GroES system forms a nano-cage that allows encapsulation of the non-native substrate proteins and provides a physical environment optimized to promote and accelerate protein folding. This is Chaperonin GroEL 2 from Cereibacter sphaeroides (strain ATCC 17023 / DSM 158 / JCM 6121 / CCUG 31486 / LMG 2827 / NBRC 12203 / NCIMB 8253 / ATH 2.4.1.) (Rhodobacter sphaeroides).